Here is a 397-residue protein sequence, read N- to C-terminus: Methylthioribose kinase (397 aa).

Residues asparagine 44, lysine 61, and 115–117 contribute to the ATP site; that span reads EDL. Residue aspartate 233 participates in substrate binding. ATP is bound at residue 250-252; sequence DPE. Arginine 340 is a substrate binding site.

Belongs to the methylthioribose kinase family. Homodimer.

It catalyses the reaction 5-(methylsulfanyl)-D-ribose + ATP = 5-(methylsulfanyl)-alpha-D-ribose 1-phosphate + ADP + H(+). It participates in amino-acid biosynthesis; L-methionine biosynthesis via salvage pathway; S-methyl-5-thio-alpha-D-ribose 1-phosphate from S-methyl-5'-thioadenosine (hydrolase route): step 2/2. Catalyzes the phosphorylation of methylthioribose into methylthioribose-1-phosphate. The polypeptide is Methylthioribose kinase (mtnK) (Bacillus subtilis (strain 168)).